We begin with the raw amino-acid sequence, 84 residues long: RNA-binding protein Hfq (84 aa).

Residues 9–68 (DPYLNTLRKERVPVSIYLVNGIKLQGQIESFDQFVILLKNTVSQMVYKHAISTVVPGRPV) form the Sm domain.

This sequence belongs to the Hfq family. As to quaternary structure, homohexamer.

RNA chaperone that binds small regulatory RNA (sRNAs) and mRNAs to facilitate mRNA translational regulation in response to envelope stress, environmental stress and changes in metabolite concentrations. Also binds with high specificity to tRNAs. This is RNA-binding protein Hfq from Stutzerimonas stutzeri (strain A1501) (Pseudomonas stutzeri).